Reading from the N-terminus, the 126-residue chain is MIGLKGILKVIDNSGATLAECIRVVRAGKFASLGDEVVVVVKKARSGSSVTAANKVKRGDIHHAIIVRTKSPVRRPDGRYVRFDDNACVLVNKECEPLGTRILSVVANELRTKHHTKIASLAPRTI.

It belongs to the universal ribosomal protein uL14 family. Component of the mitochondrial large ribosomal subunit (mt-LSU). Mature yeast 74S mitochondrial ribosomes consist of a small (37S) and a large (54S) subunit. The 37S small subunit contains a 15S ribosomal RNA (15S mt-rRNA) and at least 32 different proteins. The 54S large subunit contains a 21S rRNA (21S mt-rRNA) and at least 45 different proteins.

The protein localises to the mitochondrion. Functionally, component of the mitochondrial ribosome (mitoribosome), a dedicated translation machinery responsible for the synthesis of mitochondrial genome-encoded proteins, including at least some of the essential transmembrane subunits of the mitochondrial respiratory chain. The mitoribosomes are attached to the mitochondrial inner membrane and translation products are cotranslationally integrated into the membrane. The chain is Large ribosomal subunit protein uL14m (mrpl38) from Schizosaccharomyces pombe (strain 972 / ATCC 24843) (Fission yeast).